The following is a 120-amino-acid chain: NADH-ubiquinone oxidoreductase chain 3 (120 aa).

3 helical membrane passes run 6 to 26 (LLFF…LTWV), 63 to 83 (IVCV…PFFF), and 85 to 105 (FFLV…FVFY).

The protein belongs to the complex I subunit 3 family.

It is found in the mitochondrion membrane. It carries out the reaction a ubiquinone + NADH + 5 H(+)(in) = a ubiquinol + NAD(+) + 4 H(+)(out). Functionally, core subunit of the mitochondrial membrane respiratory chain NADH dehydrogenase (Complex I) that is believed to belong to the minimal assembly required for catalysis. Complex I functions in the transfer of electrons from NADH to the respiratory chain. The immediate electron acceptor for the enzyme is believed to be ubiquinone. The sequence is that of NADH-ubiquinone oxidoreductase chain 3 (ND3) from Paramecium tetraurelia.